The primary structure comprises 127 residues: MWKSILAIALGAALGALLRWFLGLKLNSLLSSIPPGTLLANLVGGYVIGAAIAYFAQAPGIAPEWRLLIITGFCGGLTTFSTFSAEVVSLLQEGRLGWAAGAIATHVSGSLLMTLLGLFSMNWMLGK.

The next 4 membrane-spanning stretches (helical) occupy residues 4–24 (SILA…FLGL), 36–56 (GTLL…AYFA), 68–88 (LIIT…AEVV), and 99–119 (AAGA…LGLF). Positions 75 and 78 each coordinate Na(+).

Belongs to the fluoride channel Fluc/FEX (TC 1.A.43) family.

Its subcellular location is the cell inner membrane. It catalyses the reaction fluoride(in) = fluoride(out). Its activity is regulated as follows. Na(+) is not transported, but it plays an essential structural role and its presence is essential for fluoride channel function. Fluoride-specific ion channel. Important for reducing fluoride concentration in the cell, thus reducing its toxicity. This chain is Fluoride-specific ion channel FluC, found in Pseudomonas aeruginosa (strain UCBPP-PA14).